Reading from the N-terminus, the 343-residue chain is Nuclear hormone receptor family member nhr-167 (343 aa).

A DNA-binding region (nuclear receptor) is located at residues 5–81; it reads HQKCAVCGRF…VGMTLPSYLL (77 aa). 2 NR C4-type zinc fingers span residues 8–28 and 45–64; these read CAVCGRFTTEFNYSVLSCNSC and CFRGERCFEKTPYIFKCTSC. The 239-residue stretch at 101 to 339 folds into the NR LBD domain; it reads THNKRMDSLF…KKLVKDGIEA (239 aa).

This sequence belongs to the nuclear hormone receptor family.

The protein localises to the nucleus. Orphan nuclear receptor. In Caenorhabditis elegans, this protein is Nuclear hormone receptor family member nhr-167 (nhr-167).